Reading from the N-terminus, the 235-residue chain is Iron-sulfur cluster co-chaperone protein HscB (235 aa).

Residues Cys-41, Cys-44, Cys-58, and Cys-61 each coordinate a divalent metal cation. The 73-residue stretch at 72-144 folds into the J domain; the sequence is DYFSLMDCNR…LSRGLYLLKL (73 aa).

It belongs to the HscB family. In terms of assembly, interacts with ISCU and HSPA9 to form an iron-sulfur transfer complex. Interacts with SDHAF1 (via the first LYR motif); the interaction recruits the iron-sulfur transfer complex composed of HSC20, HSPA9 and ISCU and mediates the incorporation of iron-sulfur clusters into SDHB which also interacts with HSC20. Interacts with the cytoplasmic form of ISCU and with CIA complex member CIAO1 (via LYR motif). Homodimer. Interacts with ISCU (cytoplasmic form); this interaction stabilizes the (Fe-S) clusters on ISCU. Interacts with the CIA complex member CIAO1 (via LYR motif). In terms of tissue distribution, expressed in lung, brain, stomach, spleen, ovary, testis, liver, muscle and heart.

It is found in the cytoplasm. The protein resides in the mitochondrion. It participates in cofactor biosynthesis; iron-sulfur cluster biosynthesis. In terms of biological role, acts as a co-chaperone in iron-sulfur cluster assembly in mitochondria. Required for incorporation of iron-sulfur clusters into SDHB, the iron-sulfur protein subunit of succinate dehydrogenase that is involved in complex II of the mitochondrial electron transport chain. Recruited to SDHB by interaction with SDHAF1 which first binds SDHB and then recruits the iron-sulfur transfer complex formed by HSC20, HSPA9 and ISCU through direct binding to HSC20. Plays an essential role in hematopoiesis. Functionally, acts as a co-chaperone in iron-sulfur cluster assembly in the cytoplasm. Also mediates complex formation between components of the cytosolic iron-sulfur biogenesis pathway and the CIA targeting complex composed of CIAO1, DIPK1B/FAM69B and MMS19 by binding directly to the scaffold protein ISCU and to CIAO1. This facilitates iron-sulfur cluster insertion into a number of cytoplasmic and nuclear proteins including POLD1, ELP3, DPYD and PPAT. This Homo sapiens (Human) protein is Iron-sulfur cluster co-chaperone protein HscB.